A 280-amino-acid chain; its full sequence is Undecaprenyl-diphosphatase (280 aa).

A run of 8 helical transmembrane segments spans residues 1 to 21 (MTIL…FLPV), 41 to 61 (FVRA…LVLY), 87 to 107 (FDLY…GFLF), 115 to 135 (LGSV…MLFV), 147 to 167 (ITYP…FLPG), 186 to 206 (KAAA…ATLL), 226 to 246 (VLLV…KFFI), and 260 to 280 (YRIL…SLAV).

It belongs to the UppP family.

It localises to the cell inner membrane. It catalyses the reaction di-trans,octa-cis-undecaprenyl diphosphate + H2O = di-trans,octa-cis-undecaprenyl phosphate + phosphate + H(+). Its function is as follows. Catalyzes the dephosphorylation of undecaprenyl diphosphate (UPP). Confers resistance to bacitracin. The protein is Undecaprenyl-diphosphatase of Porphyromonas gingivalis (strain ATCC BAA-308 / W83).